The primary structure comprises 275 residues: NH(3)-dependent NAD(+) synthetase (275 aa).

Residue glycine 47–serine 54 participates in ATP binding. Aspartate 53 is a binding site for Mg(2+). Arginine 141 lines the deamido-NAD(+) pocket. Threonine 161 provides a ligand contact to ATP. Residue glutamate 166 coordinates Mg(2+). Lysine 174 and aspartate 181 together coordinate deamido-NAD(+). Residues lysine 190 and threonine 212 each coordinate ATP. Histidine 261–lysine 262 is a deamido-NAD(+) binding site.

This sequence belongs to the NAD synthetase family. In terms of assembly, homodimer.

The catalysed reaction is deamido-NAD(+) + NH4(+) + ATP = AMP + diphosphate + NAD(+) + H(+). It functions in the pathway cofactor biosynthesis; NAD(+) biosynthesis; NAD(+) from deamido-NAD(+) (ammonia route): step 1/1. In terms of biological role, catalyzes the ATP-dependent amidation of deamido-NAD to form NAD. Uses ammonia as a nitrogen source. The protein is NH(3)-dependent NAD(+) synthetase of Lactiplantibacillus plantarum (strain ATCC BAA-793 / NCIMB 8826 / WCFS1) (Lactobacillus plantarum).